Consider the following 310-residue polypeptide: Ribosomal protein L11 methyltransferase (310 aa).

The S-adenosyl-L-methionine site is built by Thr156, Gly179, Asp201, and Asn246.

It belongs to the methyltransferase superfamily. PrmA family.

It localises to the cytoplasm. The catalysed reaction is L-lysyl-[protein] + 3 S-adenosyl-L-methionine = N(6),N(6),N(6)-trimethyl-L-lysyl-[protein] + 3 S-adenosyl-L-homocysteine + 3 H(+). Its function is as follows. Methylates ribosomal protein L11. This is Ribosomal protein L11 methyltransferase from Desulfatibacillum aliphaticivorans.